Here is a 149-residue protein sequence, read N- to C-terminus: Calmodulin-1 (149 aa).

Ala2 bears the N-acetylalanine mark. EF-hand domains follow at residues 8-43 (DQIS…LGQN), 44-79 (PTEA…KMKD), 81-116 (DSEE…LGEK), and 117-149 (LTDE…MMAK). Ca(2+)-binding residues include Asp21, Asp23, Asp25, Cys27, Glu32, Asp57, Asp59, Asn61, Thr63, Glu68, Asp94, Asp96, Asn98, and Glu105. At Lys116 the chain carries N6,N6,N6-trimethyllysine. Ca(2+) contacts are provided by Asp130, Asp132, Asp134, Gln136, and Glu141.

Belongs to the calmodulin family.

In terms of biological role, calmodulin mediates the control of a large number of enzymes, ion channels and other proteins by Ca(2+). Among the enzymes to be stimulated by the calmodulin-Ca(2+) complex are a number of protein kinases and phosphatases. The protein is Calmodulin-1 (CAM81) of Petunia hybrida (Petunia).